The following is a 122-amino-acid chain: Proteasome assembly chaperone 3 (122 aa).

N-acetylmethionine is present on methionine 1.

This sequence belongs to the PSMG3 family. As to quaternary structure, homodimer. Interacts directly with alpha and beta subunits of the 20S proteasome but dissociates before the formation of half-proteasomes, probably upon recruitment of POMP. Interacts with PSMG4.

Chaperone protein which promotes assembly of the 20S proteasome. May cooperate with PSMG1-PSMG2 heterodimers to orchestrate the correct assembly of proteasomes. The protein is Proteasome assembly chaperone 3 (Psmg3) of Mus musculus (Mouse).